The primary structure comprises 492 residues: Transmembrane protein 39B (492 aa).

The segment at 1 to 54 (MGGRRGPNRTSYCRNPLCEPGSSGGSSGSHTSSASVTSVRSRTRSSSGTGLSSP) is disordered. Asn-8 is a glycosylation site (N-linked (GlcNAc...) asparagine). The segment covering 28 to 53 (GSHTSSASVTSVRSRTRSSSGTGLSS) has biased composition (low complexity). The next 8 helical transmembrane spans lie at 77–97 (SILF…VHYI), 115–135 (TSLN…IVLG), 153–175 (SLFR…GWSL), 185–205 (TYSF…IPFL), 288–308 (EVLV…VWFV), 322–342 (LFLL…LPAS), 421–441 (ILNI…YSLM), and 447–467 (HQTI…FKLL).

It belongs to the TMEM39 family.

Its subcellular location is the endoplasmic reticulum membrane. In terms of biological role, may protect the cells against DNA damage caused by exposure to the cold-warming stress and facilitates tissue damage repair during the recovery phase. This Homo sapiens (Human) protein is Transmembrane protein 39B.